The chain runs to 195 residues: Fe/S biogenesis protein NfuA (195 aa).

Residues C152 and C155 each coordinate [4Fe-4S] cluster.

This sequence belongs to the NfuA family. In terms of assembly, homodimer. [4Fe-4S] cluster is required as a cofactor.

Functionally, involved in iron-sulfur cluster biogenesis. Binds a 4Fe-4S cluster, can transfer this cluster to apoproteins, and thereby intervenes in the maturation of Fe/S proteins. Could also act as a scaffold/chaperone for damaged Fe/S proteins. In Vibrio cholerae serotype O1 (strain ATCC 39315 / El Tor Inaba N16961), this protein is Fe/S biogenesis protein NfuA.